Consider the following 221-residue polypeptide: Vesicle-associated membrane protein 714 (221 aa).

At Ala-2 the chain carries N-acetylalanine. The Cytoplasmic portion of the chain corresponds to 2–190 (AIVYAVVARG…RRALWMKNAK (189 aa)). The Longin domain maps to 7–112 (VVARGTVVLA…AMNDEFSRVL (106 aa)). The 61-residue stretch at 127–187 (TLNRVRGEVS…KRLRRALWMK (61 aa)) folds into the v-SNARE coiled-coil homology domain. Residues 191-211 (LLVLLTCLIVFLLYIIIASFC) traverse the membrane as a helical; Anchor for type IV membrane protein segment. The Vesicular portion of the chain corresponds to 212–221 (GGITLPSCRS).

Belongs to the synaptobrevin family. Highly expressed in leaves, stems and roots. Detected in flowers.

Its subcellular location is the golgi apparatus membrane. Involved in the targeting and/or fusion of transport vesicles to their target membrane. The chain is Vesicle-associated membrane protein 714 from Arabidopsis thaliana (Mouse-ear cress).